The following is a 270-amino-acid chain: Coiled-coil domain-containing protein 3 (270 aa).

The first 21 residues, 1 to 21, serve as a signal peptide directing secretion; it reads MLRQLLLAALCLAGPPAPARA. Residue Asn-100 is glycosylated (N-linked (GlcNAc...) asparagine). Residues 188–251 are a coiled coil; it reads SVQKALFEEE…NQKLSEKLAA (64 aa).

Homodimer. As to expression, expressed in umbilical vein endothelial cells (HUVEC), and at lower levels in aortic smooth muscle cells (HASMC).

It localises to the secreted. Functionally, negatively regulates TNF-alpha-induced pro-inflammatory response in endothelial cells (ECs) via inhibition of TNF-alpha-induced NF-kappaB activation in ECs. Positively regulates lipid accumulation in adipose cells. The protein is Coiled-coil domain-containing protein 3 (CCDC3) of Homo sapiens (Human).